Here is a 118-residue protein sequence, read N- to C-terminus: Large ribosomal subunit protein uL18 (118 aa).

This sequence belongs to the universal ribosomal protein uL18 family. In terms of assembly, part of the 50S ribosomal subunit; part of the 5S rRNA/L5/L18/L25 subcomplex. Contacts the 5S and 23S rRNAs.

Its function is as follows. This is one of the proteins that bind and probably mediate the attachment of the 5S RNA into the large ribosomal subunit, where it forms part of the central protuberance. The chain is Large ribosomal subunit protein uL18 from Cupriavidus pinatubonensis (strain JMP 134 / LMG 1197) (Cupriavidus necator (strain JMP 134)).